The primary structure comprises 382 residues: Palmitoyltransferase ZDHHC16B (382 aa).

Topologically, residues 1 to 75 (MRSWRWSVSR…IYWLVDNMTR (75 aa)) are cytoplasmic. A helical transmembrane segment spans residues 76–96 (WFGVVFVCLVMALTSSVVVIV). The Lumenal portion of the chain corresponds to 97-107 (YLCVLPIIFSS). The helical transmembrane segment at 108-130 (YPVYWILWHLCYGHWNLLMVVFH) threads the bilayer. At 131–196 (YYKATTTQPG…NNCVGHFNHR (66 aa)) the chain is on the cytoplasmic side. Positions 153–203 (TICKKCIVPKPARTHHCSICNRCILKMDHHCPWLNNCVGHFNHRYFFSFCL) constitute a DHHC domain. C183 functions as the S-palmitoyl cysteine intermediate in the catalytic mechanism. Residues 197–217 (YFFSFCLFMTMGCVYCSISAK) form a helical membrane-spanning segment. Topologically, residues 218-275 (DMFLDAYNAIESGRYKGGASQGEAVPGAGLIYISFQHQSSYQTPPPAFTHQERMVHKS) are lumenal. The helical transmembrane segment at 276–296 (LVYLWVLTSSVAVALGALTLW) threads the bilayer. The Cytoplasmic portion of the chain corresponds to 297–382 (HAILITRGET…PAYKSSTTAI (86 aa)).

The protein belongs to the DHHC palmitoyltransferase family.

It localises to the endoplasmic reticulum membrane. The enzyme catalyses L-cysteinyl-[protein] + hexadecanoyl-CoA = S-hexadecanoyl-L-cysteinyl-[protein] + CoA. Functionally, palmitoyl acyltransferase that mediates palmitoylation of proteins and is required during embryonic heart development. Involved in the proliferation of neural stem cells by regulating the FGF/ERK pathway. The protein is Palmitoyltransferase ZDHHC16B of Danio rerio (Zebrafish).